A 273-amino-acid chain; its full sequence is MQHEHIYFSVRMRAAQGGSHEQGGKHISGGEKIVPYHDLSSCMAELAEKGLNHSRGKPDFMNIQFEQIEEAVKYVSPLPVGTHVVSSVADGQATARSLLTEAGIKPQVIEEAYYVLSELTELRGALFIDAATGQRLDDPIKNGVRVTRMDWPLDDFSCWLNEHQLSPNIRMKEALALATKVTQHPATIAELCWSDDPDYITGYVASQKFGYQRISQLKELGEEKGCRIFFVDQTKMKNLDAYINYLTTQPVLIRWKQEVMADESRSMAGRAAE.

This sequence belongs to the BioW family. Homodimer. Mg(2+) serves as cofactor.

The enzyme catalyses heptanedioate + ATP + CoA = 6-carboxyhexanoyl-CoA + AMP + diphosphate. It participates in metabolic intermediate metabolism; pimeloyl-CoA biosynthesis; pimeloyl-CoA from pimelate: step 1/1. Its function is as follows. Catalyzes the transformation of pimelate into pimeloyl-CoA with concomitant hydrolysis of ATP to AMP. The polypeptide is 6-carboxyhexanoate--CoA ligase (Alkalihalophilus pseudofirmus (strain ATCC BAA-2126 / JCM 17055 / OF4) (Bacillus pseudofirmus)).